A 103-amino-acid polypeptide reads, in one-letter code: Small ribosomal subunit protein uS10 (103 aa).

This sequence belongs to the universal ribosomal protein uS10 family. As to quaternary structure, part of the 30S ribosomal subunit.

Involved in the binding of tRNA to the ribosomes. This is Small ribosomal subunit protein uS10 from Rubrobacter xylanophilus (strain DSM 9941 / JCM 11954 / NBRC 16129 / PRD-1).